We begin with the raw amino-acid sequence, 291 residues long: MTSKQLKLVIITGMSGAGKTVAMQSLEDLGYFCVDNLPPSLLPKFWELMKESDKMDKIALVMDLRGREFFDSIEPALDELDNTNFITTKILFLEADDKVLVSRYKETRRHHPLEPNGSVLDGINAERELLSDLKGRSQLVINTSNMAPRELRERINNEFQTEDKDVFNVQLMSFGFKYGIPIDADLVFDVRFLPNPHYIDKMRPLTGLDEDVYEYVMKWPETQTFLDKLVDLLMFTLPFYKREGKTQLVIAIGCTGGQHRSVALTEFVGKAIQQKYETTISHRDMKRRKGR.

13-20 (GMSGAGKT) provides a ligand contact to ATP. GTP is bound at residue 63–66 (DLRG).

This sequence belongs to the RapZ-like family.

In terms of biological role, displays ATPase and GTPase activities. This is Nucleotide-binding protein LMHCC_0126 from Listeria monocytogenes serotype 4a (strain HCC23).